Reading from the N-terminus, the 362-residue chain is UDP-N-acetylglucosamine--N-acetylmuramyl-(pentapeptide) pyrophosphoryl-undecaprenol N-acetylglucosamine transferase (362 aa).

UDP-N-acetyl-alpha-D-glucosamine contacts are provided by residues 15 to 17 (TGG), Asn127, Arg165, Ser191, Ile247, 266 to 271 (ALTVSE), and Gln292.

It belongs to the glycosyltransferase 28 family. MurG subfamily.

The protein localises to the cell inner membrane. The enzyme catalyses di-trans,octa-cis-undecaprenyl diphospho-N-acetyl-alpha-D-muramoyl-L-alanyl-D-glutamyl-meso-2,6-diaminopimeloyl-D-alanyl-D-alanine + UDP-N-acetyl-alpha-D-glucosamine = di-trans,octa-cis-undecaprenyl diphospho-[N-acetyl-alpha-D-glucosaminyl-(1-&gt;4)]-N-acetyl-alpha-D-muramoyl-L-alanyl-D-glutamyl-meso-2,6-diaminopimeloyl-D-alanyl-D-alanine + UDP + H(+). It functions in the pathway cell wall biogenesis; peptidoglycan biosynthesis. Cell wall formation. Catalyzes the transfer of a GlcNAc subunit on undecaprenyl-pyrophosphoryl-MurNAc-pentapeptide (lipid intermediate I) to form undecaprenyl-pyrophosphoryl-MurNAc-(pentapeptide)GlcNAc (lipid intermediate II). The protein is UDP-N-acetylglucosamine--N-acetylmuramyl-(pentapeptide) pyrophosphoryl-undecaprenol N-acetylglucosamine transferase of Shewanella oneidensis (strain ATCC 700550 / JCM 31522 / CIP 106686 / LMG 19005 / NCIMB 14063 / MR-1).